The following is a 246-amino-acid chain: Probable transcriptional regulatory protein GK2594 (246 aa).

It belongs to the TACO1 family.

It is found in the cytoplasm. This is Probable transcriptional regulatory protein GK2594 from Geobacillus kaustophilus (strain HTA426).